We begin with the raw amino-acid sequence, 368 residues long: Alanine racemase (368 aa).

The active-site Proton acceptor; specific for D-alanine is the Lys40. Lys40 is subject to N6-(pyridoxal phosphate)lysine. A substrate-binding site is contributed by Arg136. The active-site Proton acceptor; specific for L-alanine is Tyr263. Substrate is bound at residue Met310.

This sequence belongs to the alanine racemase family. The cofactor is pyridoxal 5'-phosphate.

The enzyme catalyses L-alanine = D-alanine. It functions in the pathway amino-acid biosynthesis; D-alanine biosynthesis; D-alanine from L-alanine: step 1/1. Functionally, catalyzes the interconversion of L-alanine and D-alanine. May also act on other amino acids. The polypeptide is Alanine racemase (alr) (Streptococcus uberis (strain ATCC BAA-854 / 0140J)).